A 333-amino-acid chain; its full sequence is Ornithine carbamoyltransferase (333 aa).

Carbamoyl phosphate is bound by residues 56-59 (STRT), Q83, R107, and 134-137 (HPTQ). L-ornithine is bound by residues N167, D231, and 235 to 236 (SM). Carbamoyl phosphate is bound by residues 273-274 (CL) and R318.

It belongs to the aspartate/ornithine carbamoyltransferase superfamily. OTCase family.

It localises to the cytoplasm. The enzyme catalyses carbamoyl phosphate + L-ornithine = L-citrulline + phosphate + H(+). It participates in amino-acid biosynthesis; L-arginine biosynthesis; L-arginine from L-ornithine and carbamoyl phosphate: step 1/3. Reversibly catalyzes the transfer of the carbamoyl group from carbamoyl phosphate (CP) to the N(epsilon) atom of ornithine (ORN) to produce L-citrulline. The chain is Ornithine carbamoyltransferase (argF) from Staphylococcus aureus (strain Mu50 / ATCC 700699).